The following is a 193-amino-acid chain: Potassium-transporting ATPase KdpC subunit (193 aa).

A helical membrane pass occupies residues 10-30 (AAIIIFSVLTGVIYPALVTVI).

Belongs to the KdpC family. In terms of assembly, the system is composed of three essential subunits: KdpA, KdpB and KdpC.

Its subcellular location is the cell membrane. Functionally, part of the high-affinity ATP-driven potassium transport (or Kdp) system, which catalyzes the hydrolysis of ATP coupled with the electrogenic transport of potassium into the cytoplasm. This subunit acts as a catalytic chaperone that increases the ATP-binding affinity of the ATP-hydrolyzing subunit KdpB by the formation of a transient KdpB/KdpC/ATP ternary complex. The polypeptide is Potassium-transporting ATPase KdpC subunit (Herpetosiphon aurantiacus (strain ATCC 23779 / DSM 785 / 114-95)).